Consider the following 624-residue polypeptide: Actin-related protein 8 (624 aa).

Position 1 is an N-acetylmethionine (M1). Residues 1 to 25 (MTQAEKGDAENGKEKGGEKEKEQRG) are compositionally biased toward basic and acidic residues. A disordered region spans residues 1 to 29 (MTQAEKGDAENGKEKGGEKEKEQRGVKRP). Residues S55 and T56 each contribute to the ATP site. S132 carries the post-translational modification Phosphoserine. ATP is bound at residue 283–286 (DVGD). Position 412 is a phosphoserine (S412). The disordered stretch occupies residues 430–460 (SKQEQSAKATADRKSASKPIGFEGDLRGQSS).

This sequence belongs to the actin family. ARP8 subfamily. As to quaternary structure, component of the chromatin remodeling INO80 complex; specifically part of a complex module associated with the DBINO domain of INO80. Exists as monomers and dimers, but the dimer is most probably the biologically relevant form required for stable interactions with histones that exploits the twofold symmetry of the nucleosome core.

It localises to the nucleus. Its subcellular location is the chromosome. Plays an important role in the functional organization of mitotic chromosomes. Exhibits low basal ATPase activity, and unable to polymerize. Functionally, proposed core component of the chromatin remodeling INO80 complex which is involved in transcriptional regulation, DNA replication and probably DNA repair. Required for the recruitment of INO80 (and probably the INO80 complex) to sites of DNA damage Strongly prefer nucleosomes and H3-H4 tetramers over H2A-H2B dimers, suggesting it may act as a nucleosome recognition module within the complex. In Ailuropoda melanoleuca (Giant panda), this protein is Actin-related protein 8 (ACTR8).